Here is a 121-residue protein sequence, read N- to C-terminus: Large ribosomal subunit protein bL31 (121 aa).

The segment at 1–97 (MKEGIHPDYK…AKENRAAKRA (97 aa)) is large ribosomal subunit protein bL31. Zn(2+) is bound by residues Cys-16, Cys-18, Cys-36, and Cys-39. Low complexity predominate over residues 65 to 80 (ATPAKAEPAKKAPAAE). The interval 65 to 121 (ATPAKAEPAKKAPAAEPAKKVEAAKENRAAKRAKAGKSKKSEAAPAAEAPAADAKPE) is disordered. The interval 74–121 (KKAPAAEPAKKVEAAKENRAAKRAKAGKSKKSEAAPAAEAPAADAKPE) is unknown. Residues 81–93 (PAKKVEAAKENRA) show a composition bias toward basic and acidic residues. Positions 107–121 (AAPAAEAPAADAKPE) are enriched in low complexity.

This sequence belongs to the bacterial ribosomal protein bL31 family. Type A subfamily. In terms of assembly, part of the 50S ribosomal subunit. Zn(2+) is required as a cofactor.

Functionally, binds the 23S rRNA. The chain is Large ribosomal subunit protein bL31 from Anaeromyxobacter dehalogenans (strain 2CP-C).